The following is a 102-amino-acid chain: Large ribosomal subunit protein mL63 (102 aa).

This sequence belongs to the mitochondrion-specific ribosomal protein mL63 family.

The protein resides in the mitochondrion. The chain is Large ribosomal subunit protein mL63 (MRPL57) from Bos taurus (Bovine).